The chain runs to 880 residues: GRB2-associated and regulator of MAPK protein 2 (880 aa).

The CABIT stretch occupies residues 12-320; that stretch reads RWSMGAFPLD…HFLLLTDTPR (309 aa). 5 disordered regions span residues 385 to 407, 461 to 483, 527 to 548, 569 to 611, and 633 to 713; these read PGAV…PGDS, IVGP…SEAV, SSLS…GSGS, SESS…ADTP, and APFG…ELGQ. Composition is skewed to low complexity over residues 640 to 663 and 683 to 696; these read PFSG…STSG and QGYS…LSSS. Phosphoserine is present on Ser-740. Positions 813 to 877 constitute an SAM domain; it reads SALSLEEVSR…KIMQFIKGWR (65 aa).

It belongs to the GAREM family.

Its function is as follows. Probable adapter protein that provides a critical link between cell surface epidermal growth factor receptor and the MAPK/ERK signaling pathway. This chain is GRB2-associated and regulator of MAPK protein 2 (Garem2), found in Mus musculus (Mouse).